A 143-amino-acid chain; its full sequence is Transcriptional regulator MraZ (143 aa).

SpoVT-AbrB domains follow at residues 5–47 (TYTP…PREE) and 76–119 (TDEQ…DAQA).

This sequence belongs to the MraZ family. In terms of assembly, forms oligomers.

Its subcellular location is the cytoplasm. It is found in the nucleoid. This is Transcriptional regulator MraZ from Rhodococcus jostii (strain RHA1).